We begin with the raw amino-acid sequence, 68 residues long: Disintegrin EMS11A (68 aa).

Residues 1–65 (NSAHPCCDPV…DCPRNRYKGK (65 aa)) enclose the Disintegrin domain. Cystine bridges form between Cys6-Cys29, Cys20-Cys26, Cys25-Cys50, and Cys38-Cys57. A Cell attachment site; atypical (MLD) motif is present at residues 42–44 (MLD).

This sequence belongs to the disintegrin family. Dimeric disintegrin subfamily. In terms of assembly, heterodimer; disulfide-linked. Expressed by the venom gland.

Its subcellular location is the secreted. Poor inhibitor of platelet aggregation. The disintegrin inhibits the adhesion of both the alpha-4/beta-1 (ITGA4/ITGB1) and the alpha-5/beta-1 (ITGA5/ITGB1) integrins to VCAM-1 and fibronectin respectively with almost the same degree of specificity. Inhibition on alpha-IIb/beta-3 (ITGA2B/ITGB3) is low. This is Disintegrin EMS11A from Echis multisquamatus (Central Asian sand viper).